Here is a 328-residue protein sequence, read N- to C-terminus: Probable cell division protein WhiA (328 aa).

A DNA-binding region (H-T-H motif) is located at residues 276–309 (SLEELGRLADPQMTKDAVAGRIRRLLHMADKKAS).

Belongs to the WhiA family.

Its function is as follows. Involved in cell division and chromosome segregation. The protein is Probable cell division protein WhiA of Corynebacterium diphtheriae (strain ATCC 700971 / NCTC 13129 / Biotype gravis).